We begin with the raw amino-acid sequence, 232 residues long: DQGAGVTYLEPSASQIGHKESIKDTARVLGRMFDGIEYRGFGQDVVEELAKYAGVPVFNGLTNEFHPTQMLADALTMREHSDKPLNQIAFAYVGDARYNMANSLLVLAAKLGMDVRIGAPKSLWPSENIIETVQAVAKETGGRILLTENVKEAVKGVDFIHTDVWVSMGEPKEAWQERIDLLKGYRVTPELMVAAENPQVKFMHCLPAFHNRETKVGEWIYETFGLNGVEVT.

Carbamoyl phosphate is bound by residues Gln15, Arg39, and 66–69 (HPTQ). L-ornithine-binding positions include Asn99, Asp163, and 167–168 (SM). Residues 204 to 207 (HCLP) and Thr232 each bind carbamoyl phosphate.

The protein belongs to the aspartate/ornithine carbamoyltransferase superfamily. OTCase family.

The protein localises to the cytoplasm. It catalyses the reaction carbamoyl phosphate + L-ornithine = L-citrulline + phosphate + H(+). The protein operates within amino-acid biosynthesis; L-arginine biosynthesis; L-arginine from L-ornithine and carbamoyl phosphate: step 1/3. In terms of biological role, reversibly catalyzes the transfer of the carbamoyl group from carbamoyl phosphate (CP) to the N(epsilon) atom of ornithine (ORN) to produce L-citrulline. The chain is Ornithine carbamoyltransferase (argF) from Neisseria subflava.